A 196-amino-acid polypeptide reads, in one-letter code: Putative tyrosine-protein phosphatase OCA1 (196 aa).

A Tyrosine-protein phosphatase domain is found at 33–192 (NFCPVEKQLY…SVQIDPTKMP (160 aa)). The active-site Phosphocysteine intermediate is Cys-130.

It belongs to the protein-tyrosine phosphatase family.

It localises to the cytoplasm. It carries out the reaction O-phospho-L-tyrosyl-[protein] + H2O = L-tyrosyl-[protein] + phosphate. In terms of biological role, putative tyrosine-protein phosphatase required for protection against superoxide stress. The sequence is that of Putative tyrosine-protein phosphatase OCA1 (OCA1) from Debaryomyces hansenii (strain ATCC 36239 / CBS 767 / BCRC 21394 / JCM 1990 / NBRC 0083 / IGC 2968) (Yeast).